Reading from the N-terminus, the 73-residue chain is Cell division protein ZapB (73 aa).

A coiled-coil region spans residues 3–67 (LELLSKLETK…WNDKVTGLVG (65 aa)).

The protein belongs to the ZapB family. As to quaternary structure, homodimer. The ends of the coiled-coil dimer bind to each other, forming polymers. Interacts with FtsZ.

It localises to the cytoplasm. Functionally, non-essential, abundant cell division factor that is required for proper Z-ring formation. It is recruited early to the divisome by direct interaction with FtsZ, stimulating Z-ring assembly and thereby promoting cell division earlier in the cell cycle. Its recruitment to the Z-ring requires functional FtsA or ZipA. This chain is Cell division protein ZapB, found in Shewanella sp. (strain ANA-3).